Reading from the N-terminus, the 306-residue chain is Non-specific ribonucleoside hydrolase RihC (306 aa).

H235 is an active-site residue.

It belongs to the IUNH family. RihC subfamily.

Hydrolyzes both purine and pyrimidine ribonucleosides with a broad-substrate specificity. This chain is Non-specific ribonucleoside hydrolase RihC, found in Salmonella agona (strain SL483).